A 540-amino-acid chain; its full sequence is 2-isopropylmalate synthase (540 aa).

Positions 8–269 (VLIFDTTLRD…YFNPFFGRAE (262 aa)) constitute a Pyruvate carboxyltransferase domain. Residues aspartate 17, histidine 208, histidine 210, and asparagine 244 each coordinate Mn(2+). Positions 408–540 (QLKLVQVSCG…ATPLDASPTL (133 aa)) are regulatory domain.

The protein belongs to the alpha-IPM synthase/homocitrate synthase family. LeuA type 1 subfamily. In terms of assembly, homodimer. It depends on Mn(2+) as a cofactor.

The protein localises to the cytoplasm. The enzyme catalyses 3-methyl-2-oxobutanoate + acetyl-CoA + H2O = (2S)-2-isopropylmalate + CoA + H(+). It functions in the pathway amino-acid biosynthesis; L-leucine biosynthesis; L-leucine from 3-methyl-2-oxobutanoate: step 1/4. Its function is as follows. Catalyzes the condensation of the acetyl group of acetyl-CoA with 3-methyl-2-oxobutanoate (2-ketoisovalerate) to form 3-carboxy-3-hydroxy-4-methylpentanoate (2-isopropylmalate). In Synechococcus sp. (strain WH7803), this protein is 2-isopropylmalate synthase.